The following is a 442-amino-acid chain: GTPase Der (442 aa).

EngA-type G domains lie at 3–167 (PTIV…PPDV) and 177–350 (PRIA…AAAM). GTP-binding positions include 9–16 (GRPNVGKS), 56–60 (DTAGF), 119–122 (NKSE), 183–190 (GRPNVGKS), 230–234 (DTAGL), and 295–298 (NKWD). The KH-like domain occupies 351–435 (VNLSTPRLTR…PLRIQFRTAH (85 aa)).

It belongs to the TRAFAC class TrmE-Era-EngA-EngB-Septin-like GTPase superfamily. EngA (Der) GTPase family. Associates with the 50S ribosomal subunit.

GTPase that plays an essential role in the late steps of ribosome biogenesis. This Aromatoleum aromaticum (strain DSM 19018 / LMG 30748 / EbN1) (Azoarcus sp. (strain EbN1)) protein is GTPase Der.